Consider the following 229-residue polypeptide: Demethylmenaquinone methyltransferase (229 aa).

S-adenosyl-L-methionine is bound by residues Thr62, Asp80, 100–101, and Ser117; that span reads DG.

It belongs to the class I-like SAM-binding methyltransferase superfamily. MenG/UbiE family.

The enzyme catalyses a 2-demethylmenaquinol + S-adenosyl-L-methionine = a menaquinol + S-adenosyl-L-homocysteine + H(+). Its pathway is quinol/quinone metabolism; menaquinone biosynthesis; menaquinol from 1,4-dihydroxy-2-naphthoate: step 2/2. Methyltransferase required for the conversion of demethylmenaquinol (DMKH2) to menaquinol (MKH2). The sequence is that of Demethylmenaquinone methyltransferase from Corynebacterium kroppenstedtii (strain DSM 44385 / JCM 11950 / CIP 105744 / CCUG 35717).